The primary structure comprises 246 residues: Pyridoxine 5'-phosphate synthase (246 aa).

Position 10 (asparagine 10) interacts with 3-amino-2-oxopropyl phosphate. Position 12-13 (12-13 (DH)) interacts with 1-deoxy-D-xylulose 5-phosphate. Arginine 21 is a binding site for 3-amino-2-oxopropyl phosphate. Histidine 46 acts as the Proton acceptor in catalysis. Residues arginine 48 and histidine 53 each coordinate 1-deoxy-D-xylulose 5-phosphate. Glutamate 73 acts as the Proton acceptor in catalysis. 1-deoxy-D-xylulose 5-phosphate is bound at residue threonine 103. Histidine 193 acts as the Proton donor in catalysis. 3-amino-2-oxopropyl phosphate is bound by residues glycine 194 and 215-216 (GH).

This sequence belongs to the PNP synthase family. As to quaternary structure, homooctamer; tetramer of dimers.

The protein resides in the cytoplasm. The enzyme catalyses 3-amino-2-oxopropyl phosphate + 1-deoxy-D-xylulose 5-phosphate = pyridoxine 5'-phosphate + phosphate + 2 H2O + H(+). The protein operates within cofactor biosynthesis; pyridoxine 5'-phosphate biosynthesis; pyridoxine 5'-phosphate from D-erythrose 4-phosphate: step 5/5. Functionally, catalyzes the complicated ring closure reaction between the two acyclic compounds 1-deoxy-D-xylulose-5-phosphate (DXP) and 3-amino-2-oxopropyl phosphate (1-amino-acetone-3-phosphate or AAP) to form pyridoxine 5'-phosphate (PNP) and inorganic phosphate. This Rhodopirellula baltica (strain DSM 10527 / NCIMB 13988 / SH1) protein is Pyridoxine 5'-phosphate synthase.